Reading from the N-terminus, the 289-residue chain is MTFCLLPAFTQAFCGCIFINPLTMSATLSRMDCCVGLPHCMGWLPSPVGAVAFVMEGALPIPWSYYLNSYDKHVLQQLDCLCLFPVTCYQSFTSYVTGDEVWSLHCHCGRQGSLQVGPRRLQCLAAAKVRELVVQKFLLGTRFNEYYPQYRVHANRYVNPGLEYVGSVWCGKHFIYVRADGAEFARLKGLRARLGQGVLFCESLLSCYVVIVCQQCACPPTDAQVDHCMRLLSFTLRRWQNLLLGRSGSSPLIPGFDIPRNRTERLRQRMLHRFYSYRTPIYRLTYLRG.

Belongs to the adenoviridae E4 30 to 34 kDa protein family. Interacts with E1B-55k.

It localises to the host nucleus. It is found in the host cytoplasm. Functionally, plays a major role to prevent cellular inhibition of viral genome replication by nuclear bodies. Assembles an SCF-like E3 ubiquitin ligase complex based on the cellular proteins ELOB, ELOC, CUL5 and RBX1, in cooperation with viral E1B-55K. This viral RING-type ligase ubiquitinates cellular substrates prior to proteasomal degradation: p53/TP53, LIG4, MRE11-RAD50-NBS1 (MRN) complex, ITGA3, DAXX and BLM. This is Probable early E4 33 kDa protein from Mus musculus (Mouse).